The chain runs to 306 residues: uncharacterized protein (306 aa).

9 helical membrane-spanning segments follow: residues 6-26 (VQIM…FPGI), 37-57 (HLAL…AVLT), 67-87 (IPAI…LLNI), 91-111 (TVSA…SAML), 125-145 (WLGS…AGDF), 148-168 (SMSG…YFVF), 177-197 (GFIP…LVFL), 213-233 (LSIV…LAYV), and 251-271 (ALAL…LSLL). 2 consecutive EamA domains span residues 17-140 (GLWA…LIAF) and 160-285 (FSES…FTYL).

This sequence belongs to the EamA transporter family.

It localises to the cell membrane. This is an uncharacterized protein from Bacillus subtilis (strain 168).